A 364-amino-acid polypeptide reads, in one-letter code: tRNA 2-selenouridine synthase (364 aa).

The Rhodanese domain maps to Leu-14–Trp-137. Cys-97 (S-selanylcysteine intermediate) is an active-site residue. Gly-149 contributes to the (2E)-geranyl diphosphate binding site.

Belongs to the SelU family. In terms of assembly, monomer.

The catalysed reaction is 5-methylaminomethyl-2-thiouridine(34) in tRNA + selenophosphate + (2E)-geranyl diphosphate + H2O + H(+) = 5-methylaminomethyl-2-selenouridine(34) in tRNA + (2E)-thiogeraniol + phosphate + diphosphate. The enzyme catalyses 5-methylaminomethyl-2-thiouridine(34) in tRNA + (2E)-geranyl diphosphate = 5-methylaminomethyl-S-(2E)-geranyl-thiouridine(34) in tRNA + diphosphate. It catalyses the reaction 5-methylaminomethyl-S-(2E)-geranyl-thiouridine(34) in tRNA + selenophosphate + H(+) = 5-methylaminomethyl-2-(Se-phospho)selenouridine(34) in tRNA + (2E)-thiogeraniol. It carries out the reaction 5-methylaminomethyl-2-(Se-phospho)selenouridine(34) in tRNA + H2O = 5-methylaminomethyl-2-selenouridine(34) in tRNA + phosphate. Functionally, involved in the post-transcriptional modification of the uridine at the wobble position (U34) of tRNA(Lys), tRNA(Glu) and tRNA(Gln). Catalyzes the conversion of 2-thiouridine (S2U-RNA) to 2-selenouridine (Se2U-RNA). Acts in a two-step process involving geranylation of 2-thiouridine (S2U) to S-geranyl-2-thiouridine (geS2U) and subsequent selenation of the latter derivative to 2-selenouridine (Se2U) in the tRNA chain. This Salmonella typhimurium (strain LT2 / SGSC1412 / ATCC 700720) protein is tRNA 2-selenouridine synthase.